The following is a 270-amino-acid chain: tRNA pseudouridine synthase A (270 aa).

Aspartate 60 serves as the catalytic Nucleophile. Residues 107–111 (FHARF) are RNA binding. Tyrosine 118 provides a ligand contact to substrate. Residues 168 to 172 (QCQSR) are interaction with tRNA.

Belongs to the tRNA pseudouridine synthase TruA family. In terms of assembly, homodimer.

The catalysed reaction is uridine(38/39/40) in tRNA = pseudouridine(38/39/40) in tRNA. Functionally, formation of pseudouridine at positions 38, 39 and 40 in the anticodon stem and loop of transfer RNAs. In Escherichia fergusonii (strain ATCC 35469 / DSM 13698 / CCUG 18766 / IAM 14443 / JCM 21226 / LMG 7866 / NBRC 102419 / NCTC 12128 / CDC 0568-73), this protein is tRNA pseudouridine synthase A.